The sequence spans 265 residues: Inositol-1-monophosphatase (265 aa).

Positions 69, 87, 89, and 90 each coordinate Mg(2+). A substrate-binding site is contributed by Glu-69. Residues 89–92 (IDGT), Arg-185, and Asp-214 each bind substrate. Residue Asp-214 coordinates Mg(2+).

This sequence belongs to the inositol monophosphatase superfamily. Mg(2+) serves as cofactor.

It catalyses the reaction a myo-inositol phosphate + H2O = myo-inositol + phosphate. The enzyme catalyses a ribonucleoside 5'-phosphate + H2O = a ribonucleoside + phosphate. In terms of biological role, hydrolyzes myo-inositol monophosphate. Catalyzes the dephosphorylation of GMP and IMP. In Bacillus subtilis (strain 168), this protein is Inositol-1-monophosphatase.